The chain runs to 403 residues: S-adenosylmethionine synthase (403 aa).

H14 serves as a coordination point for ATP. D16 lines the Mg(2+) pocket. E42 serves as a coordination point for K(+). The L-methionine site is built by E55 and Q99. Residues 99 to 109 form a flexible loop region; sequence QSPEIAEGVDH. ATP-binding positions include 180 to 182, 250 to 251, D259, 265 to 266, A282, and K286; these read DAK, RF, and RK. D259 serves as a coordination point for L-methionine. An L-methionine-binding site is contributed by K290.

This sequence belongs to the AdoMet synthase family. In terms of assembly, homotetramer; dimer of dimers. Mg(2+) serves as cofactor. K(+) is required as a cofactor.

It is found in the cytoplasm. The enzyme catalyses L-methionine + ATP + H2O = S-adenosyl-L-methionine + phosphate + diphosphate. It functions in the pathway amino-acid biosynthesis; S-adenosyl-L-methionine biosynthesis; S-adenosyl-L-methionine from L-methionine: step 1/1. Its function is as follows. Catalyzes the formation of S-adenosylmethionine (AdoMet) from methionine and ATP. The overall synthetic reaction is composed of two sequential steps, AdoMet formation and the subsequent tripolyphosphate hydrolysis which occurs prior to release of AdoMet from the enzyme. This is S-adenosylmethionine synthase from Deinococcus deserti (strain DSM 17065 / CIP 109153 / LMG 22923 / VCD115).